The sequence spans 311 residues: Histidine decarboxylase proenzyme (311 aa).

Positions 64 and 82 each coordinate substrate. Serine 83 carries the pyruvic acid (Ser) modification. The active-site Proton donor is the glutamate 198.

The proenzyme is a hexamer of identical pi chains; each pi chain monomer is cleaved to form a small (or beta) chain and a large (or alpha) chain by non-hydrolytic self-catalysis. Pyruvate serves as cofactor.

The catalysed reaction is L-histidine + H(+) = histamine + CO2. This Lactobacillus sp. (strain 30a) protein is Histidine decarboxylase proenzyme (hdcA).